Here is a 605-residue protein sequence, read N- to C-terminus: Podocalyxin-like protein 2 (605 aa).

The first 32 residues, 1 to 32 (MGRLLRAARLPPLLSPLLLLLVGGAFLGACVA), serve as a signal peptide directing secretion. Residues 33–500 (GSDEPGPEGL…ASQVRSDYGT (468 aa)) are Extracellular-facing. The O-linked (Xyl...) (chondroitin sulfate) serine glycan is linked to Ser-79. Sulfotyrosine occurs at positions 97 and 118. Positions 129-134 (SIEDTS) are O-glycosylated at one site. The segment at 129 to 347 (SIEDTSQAQE…PGDMELTPSS (219 aa)) is disordered. Ser-144 is a glycosylation site (O-linked (GalNAc...) serine). Over residues 162–189 (EEEEEEEEEEEREKEEVEKQEEEEEEEL) the composition is skewed to acidic residues. Asn-193 is a glycosylation site (N-linked (GlcNAc...) asparagine). Polar residues predominate over residues 207–217 (SLTSSSQTPGA). Composition is skewed to low complexity over residues 241–255 (PSLLLPSVTPTTVTP) and 288–298 (EATAGAAGLSG). Asn-395 carries an N-linked (GlcNAc...) asparagine glycan. The helical transmembrane segment at 501-521 (LFVVLVVIGAICIIIIALGLL) threads the bilayer. Residues 522 to 605 (YNCWQRRLPK…SDVFEEDTHL (84 aa)) lie on the Cytoplasmic side of the membrane. A disordered region spans residues 554-605 (LDVASDSQSEMQEKHPSLNGGGALNGPGSWGALMGGKRDPEDSDVFEEDTHL). Position 570 is a phosphoserine (Ser-570). Gly residues predominate over residues 572–582 (NGGGALNGPGS). Residues 594 to 605 (EDSDVFEEDTHL) show a composition bias toward acidic residues. Residue Ser-596 is modified to Phosphoserine.

Belongs to the podocalyxin family. As to quaternary structure, homodimer; disulfide-linked. Interacts with SELL, SELE and SELP. Post-translationally, O-glycosylated; contains chondroitin sulfate. Displays sialylated O-linked oligosaccharides. In terms of processing, sulfation is necessary for interaction with SELL. Sialylated O-linked oligosaccharides are necessary for interaction with SELL, SELE and SELP. As to expression, expressed in T-cells, B-cells and monocytes. Expression is higher on memory and germinal center cells than on naive B-cells (at protein level). Highly expressed in brain. Moderately expressed in pancreas, kidney and lymphoid node. Weakly expressed in liver. Detected in both endothelial cells and CD34+ bone marrow cells.

The protein resides in the membrane. In terms of biological role, acts as a ligand for vascular selectins. Mediates rapid rolling of leukocytes over vascular surfaces through high affinity divalent cation-dependent interactions with E-, P- and L-selectins. The polypeptide is Podocalyxin-like protein 2 (PODXL2) (Homo sapiens (Human)).